Here is a 1331-residue protein sequence, read N- to C-terminus: Contactin-associated protein-like 2 (1331 aa).

An N-terminal signal peptide occupies residues 1–27 (MLAAPRAGCGAALLLWIVSSCLCRAWT). Residues 28 to 1262 (APSTSQKCDE…IRNGVNRNSA (1235 aa)) are Extracellular-facing. The F5/8 type C domain maps to 35-181 (CDEPLVSGLP…IGLRIEVYGC (147 aa)). Cysteine 35 and cysteine 181 are joined by a disulfide. 2 consecutive Laminin G-like domains span residues 187 to 368 (VINF…SFSC) and 373 to 552 (TVPV…IDMC). N-linked (GlcNAc...) asparagine glycosylation is found at asparagine 289, asparagine 346, asparagine 363, asparagine 379, asparagine 436, asparagine 506, asparagine 507, and asparagine 546. A disulfide bridge links cysteine 336 with cysteine 368. Intrachain disulfides connect cysteine 520-cysteine 552, cysteine 558-cysteine 569, cysteine 563-cysteine 578, and cysteine 580-cysteine 590. The EGF-like 1 domain occupies 554–591 (IIDRCVPNHCERGGKCSQTWDSFKCTCDETGYTGATCH). A Fibrinogen C-terminal domain is found at 592–798 (NSIYEPSCEA…LRCQGDRNYW (207 aa)). N-linked (GlcNAc...) asparagine glycans are attached at residues asparagine 630 and asparagine 735. A Laminin G-like 3 domain is found at 799–963 (NAASFPNPSS…KVTSGFISGC (165 aa)). Disulfide bonds link cysteine 936–cysteine 963, cysteine 967–cysteine 980, cysteine 974–cysteine 989, and cysteine 991–cysteine 1001. One can recognise an EGF-like 2 domain in the interval 964-1002 (SGHCTSYGTNCENGGKCLERYHGYSCDCSNTAYDGTFCN). Positions 1023 to 1214 (ATNARDSSSR…IQGELVESNC (192 aa)) constitute a Laminin G-like 4 domain. Residues asparagine 1116 and asparagine 1198 are each glycosylated (N-linked (GlcNAc...) asparagine). Residues cysteine 1178 and cysteine 1214 are joined by a disulfide bond. A helical transmembrane segment spans residues 1263 to 1283 (IIGGVIAVVIFTILCTLVFLI). Topologically, residues 1284-1331 (RYMFRHKGTYHTNEAKGAESAESADAAIMNNDPNFTETIDESKKEWLI) are cytoplasmic. A phosphoserine mark is found at serine 1303 and serine 1306.

It belongs to the neurexin family. Interacts (via C-terminus) with KCNA2.

The protein localises to the membrane. It localises to the cell projection. The protein resides in the axon. Its subcellular location is the cell junction. It is found in the paranodal septate junction. Required for gap junction formation. Required, with CNTNAP1, for radial and longitudinal organization of myelinated axons. Plays a role in the formation of functional distinct domains critical for saltatory conduction of nerve impulses in myelinated nerve fibers. Demarcates the juxtaparanodal region of the axo-glial junction. This chain is Contactin-associated protein-like 2 (CNTNAP2), found in Pongo abelii (Sumatran orangutan).